A 32-amino-acid chain; its full sequence is ATP synthase subunit O, mitochondrial (32 aa).

The protein belongs to the ATPase delta chain family. In terms of assembly, F-type ATPases have 2 components, CF(1) - the catalytic core - and CF(0) - the membrane proton channel. CF(1) has five subunits: alpha(3), beta(3), gamma(1), delta(1), epsilon(1). CF(0) has three main subunits: a, b and c.

It is found in the mitochondrion. Its subcellular location is the mitochondrion inner membrane. Functionally, mitochondrial membrane ATP synthase (F(1)F(0) ATP synthase or Complex V) produces ATP from ADP in the presence of a proton gradient across the membrane which is generated by electron transport complexes of the respiratory chain. F-type ATPases consist of two structural domains, F(1) - containing the extramembraneous catalytic core and F(0) - containing the membrane proton channel, linked together by a central stalk and a peripheral stalk. During catalysis, ATP synthesis in the catalytic domain of F(1) is coupled via a rotary mechanism of the central stalk subunits to proton translocation. Part of the complex F(0) domain and the peripheric stalk, which acts as a stator to hold the catalytic alpha(3)beta(3) subcomplex and subunit a/ATP6 static relative to the rotary elements. In Spinacia oleracea (Spinach), this protein is ATP synthase subunit O, mitochondrial.